The sequence spans 218 residues: Small ribosomal subunit protein uS3c (218 aa).

The KH type-2 domain occupies 47–118 (VQKHMRISSG…RLNIAIARVP (72 aa)).

It belongs to the universal ribosomal protein uS3 family. As to quaternary structure, part of the 30S ribosomal subunit.

It is found in the plastid. It localises to the chloroplast. This chain is Small ribosomal subunit protein uS3c (rps3), found in Nuphar advena (Common spatterdock).